The chain runs to 383 residues: ATP phosphoribosyltransferase regulatory subunit (383 aa).

The protein belongs to the class-II aminoacyl-tRNA synthetase family. HisZ subfamily. In terms of assembly, heteromultimer composed of HisG and HisZ subunits.

The protein localises to the cytoplasm. The protein operates within amino-acid biosynthesis; L-histidine biosynthesis; L-histidine from 5-phospho-alpha-D-ribose 1-diphosphate: step 1/9. In terms of biological role, required for the first step of histidine biosynthesis. May allow the feedback regulation of ATP phosphoribosyltransferase activity by histidine. The sequence is that of ATP phosphoribosyltransferase regulatory subunit from Neisseria meningitidis serogroup C / serotype 2a (strain ATCC 700532 / DSM 15464 / FAM18).